The primary structure comprises 453 residues: Phosphomannomutase (453 aa).

The Phosphoserine intermediate role is filled by Ser96. Residues Ser96, Asp243, Asp245, and Asp247 each contribute to the Mg(2+) site.

This sequence belongs to the phosphohexose mutase family. Requires Mg(2+) as cofactor.

It carries out the reaction alpha-D-mannose 1-phosphate = D-mannose 6-phosphate. It functions in the pathway nucleotide-sugar biosynthesis; GDP-alpha-D-mannose biosynthesis; alpha-D-mannose 1-phosphate from D-fructose 6-phosphate: step 2/2. Its pathway is bacterial outer membrane biogenesis; LPS O-antigen biosynthesis. Involved in GDP-mannose biosynthesis which serves as the activated sugar nucleotide precursor for mannose residues in cell surface polysaccharides. This enzyme participates in synthesis of the LPS O7 antigen. This is Phosphomannomutase (manB) from Escherichia coli.